The following is a 384-amino-acid chain: F-box protein At2g07140 (384 aa).

Positions 1–46 constitute an F-box domain; it reads MTLPELPKDLVEEILSFVPATSLKRLRSTCKGWNRLFKDDKRFTRI.

This chain is F-box protein At2g07140, found in Arabidopsis thaliana (Mouse-ear cress).